Here is an 87-residue protein sequence, read N- to C-terminus: Defensin alpha-like protein 1 (87 aa).

An N-terminal signal peptide occupies residues 1 to 19 (MKTLILLSALVLLALQVQA). Residues 20–56 (DPIQEAEEETKTEEQPADEDQDVSVSFEGPEASAVQD) constitute a propeptide that is removed on maturation. Residues 23–41 (QEAEEETKTEEQPADEDQD) show a composition bias toward acidic residues. Residues 23–43 (QEAEEETKTEEQPADEDQDVS) form a disordered region.

It belongs to the alpha-defensin family. In terms of assembly, antiparallel homodimer; disulfide-linked. Specifically expressed in small intestine (jejunum and ileum). Probably expressed by Paneth cells at the base of intestinal crypts. Coexpressed with MMP7 in small intestine.

It localises to the secreted. Its function is as follows. Intestinal defense peptide. Has potent antibacterial activity against Gram-negative bacteria E.coli O157:H7, S.typhimurium DT104, and K.pneumoniae; and against Gram-positive bacteria S.aureus, methicillin-resistant S.aureus and L.monocytogenes. Remains active in the presence of NaCl and Mg(2+). Probably functions by disrupting bacterial membrane integrity. However, does not show cytotoxic activity towards human intestinal cells. The chain is Defensin alpha-like protein 1 from Rattus norvegicus (Rat).